Here is a 715-residue protein sequence, read N- to C-terminus: Transcription activator of gluconeogenesis MGYG_02011 (715 aa).

The span at 1–14 (MSPHQTTGQESDNM) shows a compositional bias: polar residues. The disordered stretch occupies residues 1–28 (MSPHQTTGQESDNMAVNGENAPASSQYI). A DNA-binding region (zn(2)-C6 fungal-type) is located at residues 66–94 (CYACQRGHLTCGDERPCQRCIKRGFQDAC). Polar residues-rich tracts occupy residues 129–166 (QNNVNGSNTSPGVPQQMTSPNFYSTQQSPDYNSFPQNK), 179–191 (YASQSPVSPTYQI), 203–223 (SLPQSASETPSTANAAPGQFN), and 362–385 (MMTTNSATFEDTTNSGAFSSRPNA). Disordered regions lie at residues 129-223 (QNNV…GQFN), 354-414 (SPAS…RRRH), 534-569 (NHNVNTGGSSGLVTDSTSRGSYTPRPYSSDVYNSST), and 628-663 (GSNGEADAGQNGEASSSEANELNGSNANGATTNGRG). The segment covering 386–400 (SVSQQRQQPVVSTPQ) has biased composition (low complexity). 2 stretches are compositionally biased toward polar residues: residues 535-554 (HNVNTGGSSGLVTDSTSRGS) and 639-649 (GEASSSEANEL). Positions 650 to 662 (NGSNANGATTNGR) are enriched in low complexity.

This sequence belongs to the ERT1/acuK family.

The protein localises to the nucleus. In terms of biological role, transcription factor which regulates nonfermentable carbon utilization. Activator of gluconeogenetic genes. The protein is Transcription activator of gluconeogenesis MGYG_02011 of Arthroderma gypseum (strain ATCC MYA-4604 / CBS 118893) (Microsporum gypseum).